The chain runs to 1026 residues: Contactin-4 (1026 aa).

Residues 1-18 (MRLPWELLVLQSFILCLA) form the signal peptide. 6 consecutive Ig-like C2-type domains span residues 32–117 (PSPV…AKLQ), 122–207 (DNFK…KVLG), 225–311 (PKIE…GQLT), 316–400 (PNWI…AELS), 406–493 (PDFS…GNLV), and 497–586 (PTRV…DRLS). Cystine bridges form between Cys-50–Cys-100, Cys-144–Cys-194, Cys-247–Cys-295, Cys-337–Cys-384, Cys-429–Cys-477, and Cys-519–Cys-576. Residues Asn-65, Asn-90, and Asn-191 are each glycosylated (N-linked (GlcNAc...) asparagine). 3 N-linked (GlcNAc...) asparagine glycosylation sites follow: Asn-370, Asn-375, and Asn-466. Fibronectin type-III domains are found at residues 599-697 (PPEA…TEEA), 702-799 (TPAN…SAEE), 804-899 (PPAS…TRKP), and 900-995 (PPSQ…ISNA). Residues 685–710 (PSRPSEKRRTEEALPEVTPANVSGGG) form a disordered region. A compositionally biased stretch (basic and acidic residues) spans 687–696 (RPSEKRRTEE). N-linked (GlcNAc...) asparagine glycosylation is found at Asn-705, Asn-764, Asn-858, Asn-893, Asn-911, Asn-929, and Asn-954. Polar residues predominate over residues 886 to 896 (GPSSATVNVTT). Residues 886 to 907 (GPSSATVNVTTRKPPPSQPPGN) are disordered. Ser-1000 carries GPI-anchor amidated serine lipidation. A propeptide spans 1001–1026 (GASTSNACTLSAISTIMISLTARSSL) (removed in mature form).

It belongs to the immunoglobulin superfamily. Contactin family. Interacts with PTPRG. Mainly expressed in brain. Highly expressed in cerebellum and weakly expressed in corpus callosum, caudate nucleus, amygdala and spinal cord. Also expressed in testis, pancreas, thyroid, uterus, small intestine and kidney. Not expressed in skeletal muscle. Isoform 2 is weakly expressed in cerebral cortex.

The protein localises to the cell membrane. It is found in the secreted. Functionally, contactins mediate cell surface interactions during nervous system development. Has some neurite outgrowth-promoting activity. May be involved in synaptogenesis. In Homo sapiens (Human), this protein is Contactin-4 (CNTN4).